Consider the following 349-residue polypeptide: Anthranilate phosphoribosyltransferase (349 aa).

Residues G81, 84 to 85 (GD), T89, 91 to 94 (NVST), 109 to 117 (KHGNRAASS), and A121 each bind 5-phospho-alpha-D-ribose 1-diphosphate. Anthranilate is bound at residue G81. S93 is a Mg(2+) binding site. Residue N112 participates in anthranilate binding. R167 is a binding site for anthranilate. Positions 226 and 227 each coordinate Mg(2+).

The protein belongs to the anthranilate phosphoribosyltransferase family. Homodimer. Requires Mg(2+) as cofactor.

It catalyses the reaction N-(5-phospho-beta-D-ribosyl)anthranilate + diphosphate = 5-phospho-alpha-D-ribose 1-diphosphate + anthranilate. It functions in the pathway amino-acid biosynthesis; L-tryptophan biosynthesis; L-tryptophan from chorismate: step 2/5. Catalyzes the transfer of the phosphoribosyl group of 5-phosphorylribose-1-pyrophosphate (PRPP) to anthranilate to yield N-(5'-phosphoribosyl)-anthranilate (PRA). The sequence is that of Anthranilate phosphoribosyltransferase from Methylocella silvestris (strain DSM 15510 / CIP 108128 / LMG 27833 / NCIMB 13906 / BL2).